A 567-amino-acid chain; its full sequence is Glutamine--tRNA ligase (567 aa).

A 'HIGH' region motif is present at residues 47 to 57 (PEPNGYLHIGH). ATP-binding positions include 48 to 50 (EPN) and 54 to 60 (HIGHAKS). L-glutamine is bound by residues Asp-80 and Tyr-225. ATP is bound by residues Thr-244 and 274 to 275 (RL). The short motif at 281 to 285 (ITSKR) is the 'KMSKS' region element.

Belongs to the class-I aminoacyl-tRNA synthetase family. In terms of assembly, monomer.

It is found in the cytoplasm. It carries out the reaction tRNA(Gln) + L-glutamine + ATP = L-glutaminyl-tRNA(Gln) + AMP + diphosphate. This chain is Glutamine--tRNA ligase, found in Pseudomonas putida (strain ATCC 47054 / DSM 6125 / CFBP 8728 / NCIMB 11950 / KT2440).